A 509-amino-acid chain; its full sequence is Aspartyl/glutamyl-tRNA(Asn/Gln) amidotransferase subunit B (509 aa).

This sequence belongs to the GatB/GatE family. GatB subfamily. Heterotrimer of A, B and C subunits.

It catalyses the reaction L-glutamyl-tRNA(Gln) + L-glutamine + ATP + H2O = L-glutaminyl-tRNA(Gln) + L-glutamate + ADP + phosphate + H(+). The catalysed reaction is L-aspartyl-tRNA(Asn) + L-glutamine + ATP + H2O = L-asparaginyl-tRNA(Asn) + L-glutamate + ADP + phosphate + 2 H(+). Its function is as follows. Allows the formation of correctly charged Asn-tRNA(Asn) or Gln-tRNA(Gln) through the transamidation of misacylated Asp-tRNA(Asn) or Glu-tRNA(Gln) in organisms which lack either or both of asparaginyl-tRNA or glutaminyl-tRNA synthetases. The reaction takes place in the presence of glutamine and ATP through an activated phospho-Asp-tRNA(Asn) or phospho-Glu-tRNA(Gln). The protein is Aspartyl/glutamyl-tRNA(Asn/Gln) amidotransferase subunit B of Psychrobacter cryohalolentis (strain ATCC BAA-1226 / DSM 17306 / VKM B-2378 / K5).